The chain runs to 377 residues: MANVTGPQMAFYGSGAATFGYPEGMTVADFVPDRVKHMVLDHWYNYPPVNPMWHYLLGVVYLFLGVISIAGNGLVIYLYMKSQALKTPANMLIVNLALSDLIMLTTNFPPFCYNCFSGGRWMFSGTYCEIYAALGAITGVCSIWTLCMISFDRYNIICNGFNGPKLTQGKATFMCGLAWVISVGWSLPPFFGWGSYTLEGILDSCSYDYFTRDMNTITYNICIFIFDFFLPASVIVFSYVFIVKAIFAHEAAMRAQAKKMNVTNLRSNEAETQRAEIRIAKTALVNVSLWFICWTPYAAITIQGLLGNAEGITPLLTTLPALLAKSCSCYNPFVYAISHPKFRLAITQHLPWFCVHEKDPNDVEENQSSNTQTQEKS.

Residues 1-53 are Extracellular-facing; it reads MANVTGPQMAFYGSGAATFGYPEGMTVADFVPDRVKHMVLDHWYNYPPVNPMW. N3 carries N-linked (GlcNAc...) asparagine glycosylation. A helical membrane pass occupies residues 54–78; sequence HYLLGVVYLFLGVISIAGNGLVIYL. The Cytoplasmic portion of the chain corresponds to 79 to 90; it reads YMKSQALKTPAN. Residues 91–115 traverse the membrane as a helical segment; the sequence is MLIVNLALSDLIMLTTNFPPFCYNC. The Extracellular portion of the chain corresponds to 116–131; that stretch reads FSGGRWMFSGTYCEIY. C128 and C205 are disulfide-bonded. A helical membrane pass occupies residues 132–151; it reads AALGAITGVCSIWTLCMISF. Over 152-170 the chain is Cytoplasmic; the sequence is DRYNIICNGFNGPKLTQGK. A helical membrane pass occupies residues 171–194; it reads ATFMCGLAWVISVGWSLPPFFGWG. Topologically, residues 195–218 are extracellular; sequence SYTLEGILDSCSYDYFTRDMNTIT. The helical transmembrane segment at 219–246 threads the bilayer; sequence YNICIFIFDFFLPASVIVFSYVFIVKAI. The Cytoplasmic segment spans residues 247–281; the sequence is FAHEAAMRAQAKKMNVTNLRSNEAETQRAEIRIAK. The helical transmembrane segment at 282–305 threads the bilayer; the sequence is TALVNVSLWFICWTPYAAITIQGL. Residues 306–313 are Extracellular-facing; the sequence is LGNAEGIT. The chain crosses the membrane as a helical span at residues 314-338; the sequence is PLLTTLPALLAKSCSCYNPFVYAIS. K325 carries the N6-(retinylidene)lysine modification. Topologically, residues 339 to 377 are cytoplasmic; the sequence is HPKFRLAITQHLPWFCVHEKDPNDVEENQSSNTQTQEKS.

The protein belongs to the G-protein coupled receptor 1 family. Opsin subfamily. Phosphorylated on some or all of the serine and threonine residues present in the C-terminal region. As to expression, expressed in all of the seven retinular cells (R1-R7) forming the main rhabdom in each ommatidium.

The protein resides in the membrane. Functionally, visual pigments are the light-absorbing molecules that mediate vision. They consist of an apoprotein, opsin, covalently linked to cis-retinal. This opsin produces visual pigments with maximal absorption in the blue-green region of the spectrum. The chain is Compound eye opsin BCRH1 from Hemigrapsus sanguineus (Asian shore crab).